The following is a 134-amino-acid chain: Rubredoxin-2 (134 aa).

The Rubredoxin-like domain occupies 1–53; sequence MAKYQCPDCQYIYDECKGEPHEGFQPNTNWGEIPEEWACPDCAVRDKIDFKML. Positions 6, 9, 39, and 42 each coordinate Fe cation. Over residues 99 to 116 the composition is skewed to basic and acidic residues; the sequence is SITDERENTPDNKVERRS. Positions 99 to 134 are disordered; that stretch reads SITDERENTPDNKVERRSQSQAVRRSSVKKIKNNKR. Residues 124 to 134 show a composition bias toward basic residues; that stretch reads SSVKKIKNNKR.

Belongs to the rubredoxin family. Fe(3+) is required as a cofactor.

The protein resides in the cytoplasm. It participates in hydrocarbon metabolism; alkane degradation. In terms of biological role, involved in the hydrocarbon hydroxylating system, which transfers electrons from NADH to rubredoxin reductase and then through rubredoxin to alkane 1 monooxygenase. The sequence is that of Rubredoxin-2 (alkF) from Pseudomonas putida (Arthrobacter siderocapsulatus).